Reading from the N-terminus, the 412-residue chain is Peptidase T (412 aa).

Zn(2+) is bound at residue histidine 84. Aspartate 86 is a catalytic residue. Aspartate 146 is a binding site for Zn(2+). Residue glutamate 179 is the Proton acceptor of the active site. Residues glutamate 180, aspartate 202, and histidine 385 each coordinate Zn(2+).

It belongs to the peptidase M20B family. It depends on Zn(2+) as a cofactor.

Its subcellular location is the cytoplasm. It catalyses the reaction Release of the N-terminal residue from a tripeptide.. Functionally, cleaves the N-terminal amino acid of tripeptides. This is Peptidase T from Pasteurella multocida (strain Pm70).